The chain runs to 198 residues: Ribonuclease HII (198 aa).

The region spanning 10–198 (QLVAGVDEVG…PVKRALGLAS (189 aa)) is the RNase H type-2 domain. Residues aspartate 16, glutamate 17, and aspartate 108 each coordinate a divalent metal cation.

The protein belongs to the RNase HII family. Requires Mn(2+) as cofactor. Mg(2+) is required as a cofactor.

It localises to the cytoplasm. The catalysed reaction is Endonucleolytic cleavage to 5'-phosphomonoester.. In terms of biological role, endonuclease that specifically degrades the RNA of RNA-DNA hybrids. This is Ribonuclease HII from Citrobacter koseri (strain ATCC BAA-895 / CDC 4225-83 / SGSC4696).